The primary structure comprises 393 residues: Branched-chain-amino-acid aminotransferase, mitochondrial (393 aa).

A mitochondrion-targeting transit peptide spans 1 to 16 (MLQRHSLKLGKFSIRT). Lys219 is modified (N6-(pyridoxal phosphate)lysine). Thr315 is subject to Phosphothreonine.

It belongs to the class-IV pyridoxal-phosphate-dependent aminotransferase family. Requires pyridoxal 5'-phosphate as cofactor.

The protein localises to the mitochondrion matrix. It carries out the reaction L-leucine + 2-oxoglutarate = 4-methyl-2-oxopentanoate + L-glutamate. It catalyses the reaction L-isoleucine + 2-oxoglutarate = (S)-3-methyl-2-oxopentanoate + L-glutamate. The enzyme catalyses L-valine + 2-oxoglutarate = 3-methyl-2-oxobutanoate + L-glutamate. The catalysed reaction is a 2-oxocarboxylate + L-methionine = 4-methylsulfanyl-2-oxobutanoate + an L-alpha-amino acid. The protein operates within amino-acid biosynthesis; L-isoleucine biosynthesis; L-isoleucine from 2-oxobutanoate: step 4/4. It functions in the pathway amino-acid biosynthesis; L-leucine biosynthesis; L-leucine from 3-methyl-2-oxobutanoate: step 4/4. Its pathway is amino-acid biosynthesis; L-valine biosynthesis; L-valine from pyruvate: step 4/4. It participates in amino-acid biosynthesis; L-methionine biosynthesis via salvage pathway; L-methionine from S-methyl-5-thio-alpha-D-ribose 1-phosphate: step 6/6. Mitochondrial isozyme of branched-chain-amino-acid aminotransferase, involved in the biosynthesis of the branched chain amino acids (BCAAs) leucine, isoleucine, and valine. Catalyzes the formation of methionine from 2-keto-4-methylthiobutyrate (KMTB) in the methionine salvage pathway primarily using BCAAs (leucine, isoleucine, and valine) as the amino donors. Appears to be involved in the regulation of the cell cycle, although this may be indirect via metabolic changes. Connects BCAAs and TCA-cycle metabolism governing TCA-cycle flux to activate TORC1 signaling. High copy suppressor of a temperature-sensitive mutation in the ABC transporter, ATM1. This is Branched-chain-amino-acid aminotransferase, mitochondrial from Saccharomyces cerevisiae (strain ATCC 204508 / S288c) (Baker's yeast).